We begin with the raw amino-acid sequence, 2515 residues long: Probable maltase-glucoamylase 2 (2515 aa).

Topologically, residues 1 to 9 are cytoplasmic; the sequence is MARKLSVLE. A helical transmembrane segment spans residues 10 to 30; that stretch reads VLLIIFCLIVVTIDILLLLLV. The Lumenal segment spans residues 31 to 482; it reads LEETSDTSFT…DGVWIEMNEV (452 aa). The 48-residue stretch at 41–88 folds into the P-type 1 domain; the sequence is PECPEIPQSERIDCTPDQEVTEDICRWQYKCCWSPVADANVPRCFFPW. Disulfide bonds link C43/C72, C54/C71, and C65/C84. The segment at 152 to 865 is maltase; the sequence is SHENINLVDG…MDKQPANFIV (714 aa). N167 carries an N-linked (GlcNAc...) asparagine glycan. Y371 carries the post-translational modification Sulfotyrosine. N421 is a glycosylation site (N-linked (GlcNAc...) asparagine). Catalysis depends on E478, which acts as the Nucleophile. Residue E481 is part of the active site. 3 disulfide bridges follow: C608-C619, C916-C933, and C928-C946. The N-linked (GlcNAc...) asparagine glycan is linked to N613. Residues 904-950 enclose the P-type 2 domain; it reads WNLPVSDLEKFNCYPDDPTASEESCRQRGCLWEDTSTPGVPTCYYDT. Positions 1023-1766 are glucoamylase; the sequence is PLNTPPQPVG…GVNTYVTQVS (744 aa). Position 1238 is a sulfotyrosine (Y1238). D1375 functions as the Nucleophile in the catalytic mechanism. E1378 is an active-site residue. Disordered stretches follow at residues 1816 to 1901, 1994 to 2015, and 2037 to 2091; these read TPTK…PITT, STTV…STNA, and TVPD…SSTT. Over residues 1817–1831 the composition is skewed to polar residues; it reads PTKTSTIPMSSHPSP. Residues 1832–1901 show a composition bias toward low complexity; sequence STTNATSSET…STNATVPITT (70 aa). Residue N2249 is glycosylated (N-linked (GlcNAc...) asparagine).

It belongs to the glycosyl hydrolase 31 family.

It localises to the membrane. The enzyme catalyses Hydrolysis of terminal (1-&gt;4)-linked alpha-D-glucose residues successively from non-reducing ends of the chains with release of beta-D-glucose.. This chain is Probable maltase-glucoamylase 2, found in Homo sapiens (Human).